The primary structure comprises 1179 residues: Integrin alpha-1 (1179 aa).

The first 28 residues, 1–28 (MAPRPRARPGVAVACCWLLTVVLRCCVS), serve as a signal peptide directing secretion. At 29 to 1141 (FNVDVKNSMT…SKDGLPGRVP (1113 aa)) the chain is on the extracellular side. Residues 30-91 (NVDVKNSMTF…CPVGRGESLP (62 aa)) form an FG-GAP 1 repeat. A glycan (N-linked (GlcNAc...) asparagine) is linked at N74. C82 and C92 form a disulfide bridge. 9 N-linked (GlcNAc...) asparagine glycosylation sites follow: N100, N105, N112, N217, N317, N341, N402, N418, and N460. One copy of the FG-GAP 2 repeat lies at 101–160 (TSIPNVTEVKENMTFGSTLVTNPNGGFLACGPLYAYRCGHLHYTTGICSDVSPTFQVVNS). Residues 161 to 360 (IAPVQECSTQ…IVKTLGERIF (200 aa)) enclose the VWFA domain. One copy of the FG-GAP 3 repeat lies at 365 to 417 (TADQSAASFEMEMSQTGFSAHYSQDWVMLGAVGAYDWNGTVVMQKASQIIIPR). 4 FG-GAP repeats span residues 422-475 (NVES…DGNI), 476-538 (KILQ…RFEY), 557-615 (SCTT…TIRK), and 619-679 (QRIP…FEPN). Ca(2+) contacts are provided by D498, D500, D502, and D506. N532 carries N-linked (GlcNAc...) asparagine glycosylation. 8 residues coordinate Ca(2+): D580, N582, D584, D588, D642, N644, D646, and D650. A disulfide bond links C688 and C697. N-linked (GlcNAc...) asparagine glycans are attached at residues N699, N748, and N780. An intrachain disulfide couples C703 to C756. C808 and C814 are oxidised to a cystine. 8 N-linked (GlcNAc...) asparagine glycosylation sites follow: N840, N883, N908, N915, N939, N966, N974, and N1008. C878 and C886 are joined by a disulfide. 2 disulfide bridges follow: C1030/C1062 and C1065/C1072. N1073, N1083, N1102, and N1113 each carry an N-linked (GlcNAc...) asparagine glycan. The helical transmembrane segment at 1142-1164 (LWVILLSAFAGLLLLMLLILALW) threads the bilayer. Residues 1165–1179 (KIGFFKRPLKKKMEK) lie on the Cytoplasmic side of the membrane. The short motif at 1167-1171 (GFFKR) is the GFFKR motif element.

Belongs to the integrin alpha chain family. As to quaternary structure, heterodimer of an alpha and a beta subunit. Alpha-1 associates with beta-1. Interacts with RAB21. Interacts (via cytoplasmic domain) with PTPN2; activates PTPN2 phosphatase activity towards EGFR and negatively regulates EGF signaling.

Its subcellular location is the membrane. Integrin alpha-1/beta-1 is a receptor for laminin and collagen. It recognizes the proline-hydroxylated sequence G-F-P-G-E-R in collagen. Involved in anchorage-dependent, negative regulation of EGF-stimulated cell growth. This is Integrin alpha-1 (ITGA1) from Homo sapiens (Human).